The chain runs to 125 residues: Translation initiation factor 5A (125 aa).

The residue at position 35 (Lys-35) is a Hypusine.

This sequence belongs to the eIF-5A family.

The protein resides in the cytoplasm. Its function is as follows. Functions by promoting the formation of the first peptide bond. This Methanoregula boonei (strain DSM 21154 / JCM 14090 / 6A8) protein is Translation initiation factor 5A (eIF5A).